The sequence spans 1038 residues: Protein transport protein SEC24 A (1038 aa).

The disordered stretch occupies residues 1-247 (MGTENQGYPN…PPHTGGFAQR (247 aa)). Pro residues predominate over residues 22-33 (SAPPPGIPPQSG). Residues cysteine 371, cysteine 374, cysteine 393, and cysteine 396 each coordinate Zn(2+). Residues 371–396 (CRRCRTYVNPFVTFTDSGRKWRCNIC) are zinc finger-like.

This sequence belongs to the SEC23/SEC24 family. SEC24 subfamily. As to quaternary structure, component of the coat protein complex II (COPII), composed of at least five proteins: the Sec23/24 complex, the Sec13/31 complex and Sar1. Interacts with SEC221, SEC23E/SEC23A, SEC23B, SEC23G/SEC23C and SEC23F/SEC23D. (Microbial infection) Interacts with turnip mosaic virus (TuMV) 6K2 in COPII-coated vesicles. In terms of tissue distribution, mainly expressed in pollen, leaves, inflorescences, roots and stems, and, to a lower extent, in cotyledons, petioles and hypocotyls.

The protein resides in the cytoplasmic vesicle. It is found in the COPII-coated vesicle membrane. It localises to the endoplasmic reticulum membrane. The protein localises to the golgi apparatus membrane. Its subcellular location is the cytoplasm. The protein resides in the cytosol. Functionally, essential protein. Component of the coat protein complex II (COPII), that covers ER-derived vesicles involved in transport from the endoplasmic reticulum to the Golgi apparatus. COPII is composed of at least five proteins: the SEC23/24 complex, the SEC13/31 complex, and the protein SAR1. Acts in the cytoplasm to promote the transport of secretory, plasma membrane, and vacuolar proteins from the endoplasmic reticulum to the Golgi complex. Involved in maintaining the dynamic identity of organelles of the early secretory pathway. Regulates cell size patterning, and prevents CDKA;1-, DEK1- and ACR4-dependent endoreduplication and giant cells formation in sepals. Required for male gametophytes (pollen grains) development and transmission. In terms of biological role, (Microbial infection) Contributes to viral systemic infection of turnip mosaic virus (TuMV) by triggering the formation of host endoplasmic reticulum (ER)-derived viral vesicles that carry the viral RNA (vRNA) to plasmodesmata for cell-to-cell viral movement. The polypeptide is Protein transport protein SEC24 A (Arabidopsis thaliana (Mouse-ear cress)).